The primary structure comprises 297 residues: Lipoprotein NlpD/LppB homolog (297 aa).

The first 22 residues, 1–22, serve as a signal peptide directing secretion; it reads MDKGEGLRLAATLRQWTRLYGG. The N-palmitoyl cysteine moiety is linked to residue C23. The S-diacylglycerol cysteine moiety is linked to residue C23. A LysM domain is found at 67–111; it reads GQYIVRRGDTLYSIAFRFGWDWKALAARNGIAPPYTIQVGQAIQF. Positions 134-168 are disordered; it reads TKPTPVPPAVSTSVPAKPAPAPASTTTPPSSGATP.

The protein belongs to the E.coli NlpD/Haemophilus LppB family.

The protein resides in the cell inner membrane. The polypeptide is Lipoprotein NlpD/LppB homolog (Pseudomonas aeruginosa (strain ATCC 15692 / DSM 22644 / CIP 104116 / JCM 14847 / LMG 12228 / 1C / PRS 101 / PAO1)).